The sequence spans 146 residues: Hemoglobin subunit beta (146 aa).

One can recognise a Globin domain in the interval 2 to 146 (PFSAHEEKLI…VAAALSVEYY (145 aa)). Heme b contacts are provided by His63 and His92.

This sequence belongs to the globin family. As to quaternary structure, heterotetramer of two alpha chains and two beta chains. When oxygenated in vitro, exists virtually only in polymeric form. When deoxygenated, forms tetramers, octamers and larger polymers. As to expression, red blood cells.

In terms of biological role, involved in oxygen transport from the lung to the various peripheral tissues. The protein is Hemoglobin subunit beta of Paleosuchus palpebrosus (Cuvier's smooth-fronted caiman).